The following is a 297-amino-acid chain: Phosphoribosylaminoimidazole-succinocarboxamide synthase (297 aa).

Belongs to the SAICAR synthetase family.

It catalyses the reaction 5-amino-1-(5-phospho-D-ribosyl)imidazole-4-carboxylate + L-aspartate + ATP = (2S)-2-[5-amino-1-(5-phospho-beta-D-ribosyl)imidazole-4-carboxamido]succinate + ADP + phosphate + 2 H(+). It participates in purine metabolism; IMP biosynthesis via de novo pathway; 5-amino-1-(5-phospho-D-ribosyl)imidazole-4-carboxamide from 5-amino-1-(5-phospho-D-ribosyl)imidazole-4-carboxylate: step 1/2. This is Phosphoribosylaminoimidazole-succinocarboxamide synthase from Saccharopolyspora erythraea (strain ATCC 11635 / DSM 40517 / JCM 4748 / NBRC 13426 / NCIMB 8594 / NRRL 2338).